Here is a 531-residue protein sequence, read N- to C-terminus: Type 2 DNA topoisomerase 6 subunit B (531 aa).

ATP is bound by residues Asn-42, Asp-76, 97-98, 106-113, and Lys-427; these read SK and GMYGLGVK.

It belongs to the TOP6B family. As to quaternary structure, homodimer. Heterotetramer of two Top6A and two Top6B chains.

It carries out the reaction ATP-dependent breakage, passage and rejoining of double-stranded DNA.. Functionally, relaxes both positive and negative superturns and exhibits a strong decatenase activity. In Metallosphaera sedula (strain ATCC 51363 / DSM 5348 / JCM 9185 / NBRC 15509 / TH2), this protein is Type 2 DNA topoisomerase 6 subunit B.